Here is a 367-residue protein sequence, read N- to C-terminus: WAT1-related protein At3g28050 (367 aa).

The next 10 helical transmembrane spans lie at 10–30 (VLPVTALVIMECANVGLNTLF), 40–60 (FHVFIVYSYGLAALLLLPSLF), 73–93 (FSILYKIVLLGIIGCCSNIMG), 103–123 (TLASAISNLTPAFTFLLAVVF), 142–162 (TVVSIGGAFIVTLYNGPVVIA), 179–199 (WILGAGFLAVEYFCVPLWYIV), 211–231 (FTVVCFYSIGVSFWTALVTLF), 246–266 (IALVSIVCSGLFGSCINNTIH), 276–296 (LFVAMFKPLSIAIAVAMGVIF), and 301–321 (LYIGSLIGATVITIGFYTVMW). 2 EamA domains span residues 25–153 (GLNT…FIVT) and 195–319 (LWYI…FYTV). The disordered stretch occupies residues 338–367 (HEEANEADLDSPSGSQKAPLLESYKNDEHV).

The protein belongs to the drug/metabolite transporter (DMT) superfamily. Plant drug/metabolite exporter (P-DME) (TC 2.A.7.4) family.

The protein resides in the membrane. The protein is WAT1-related protein At3g28050 of Arabidopsis thaliana (Mouse-ear cress).